The primary structure comprises 218 residues: Monomethylamine corrinoid protein 1 (218 aa).

The region spanning 1–91 (MANQEIFDKL…ELEKTKVEGE (91 aa)) is the B12-binding N-terminal domain. A B12-binding domain is found at 94–218 (TGLAITFVAE…AAKVALNIMK (125 aa)). His-107 contributes to the methylcob(III)alamin binding site.

This sequence belongs to the methylamine corrinoid protein family. Can form a complex with MtmB.

It participates in one-carbon metabolism; methanogenesis from methylamine. Acts as a methyl group carrier between MtmB and MtbA. The protein is Monomethylamine corrinoid protein 1 (mtmC1) of Methanosarcina acetivorans (strain ATCC 35395 / DSM 2834 / JCM 12185 / C2A).